We begin with the raw amino-acid sequence, 869 residues long: Phosphatidylethanolamine N-methyltransferase (869 aa).

Residue S2 is modified to N-acetylserine. Residues 2 to 55 (SSCKTTLSEMVGSVTKDRGTINVKARTRSSNVTFKPPVTHDMVRSLFDPTLKKS) lie on the Lumenal side of the membrane. Residues 56 to 76 (LLEKCIALAIISNFFICYWVF) traverse the membrane as a helical segment. Residues 77–86 (QRFGLQFTKY) lie on the Cytoplasmic side of the membrane. A helical membrane pass occupies residues 87–107 (FFLVQYLFWRIAYNLGIGLVL). Residues 108-187 (HYQSHYETLT…EINVWLIFRQ (80 aa)) are Lumenal-facing. The helical transmembrane segment at 188 to 208 (FVDLILMQDFVTYIIYVYLSI) threads the bilayer. Over 209 to 212 (PYSW) the chain is Cytoplasmic. The helical transmembrane segment at 213-233 (VQIFNWRSLLGVILILFNIWV) threads the bilayer. Topologically, residues 234–258 (KLDAHRVVKDYAWYWGDFFFLEESE) are lumenal. Residues 259 to 279 (LIFDGVFNISPHPMYSIGYLG) traverse the membrane as a helical segment. Over 280 to 291 (YYGLSLICNDYK) the chain is Cytoplasmic. A helical membrane pass occupies residues 292–310 (VLLVSVFGHYSQFLFLKYV). Topologically, residues 311–362 (ENPHIERTYGDGTDSDSQMNSRIDDLISKENYDYSRPLINMGLSFNNFNKLR) are lumenal. A helical transmembrane segment spans residues 363–383 (FTDYFTIGTVAALMLGTIMNA). At 384–389 (RFINLN) the chain is on the cytoplasmic side. The chain crosses the membrane as a helical span at residues 390 to 410 (YLFITVFVTKLVSWLFISTIL). At 411–439 (YKQSQSKWFTRLFLENGYTQVYSYEQWQF) the chain is on the lumenal side. Residues 440–460 (IYNYYLVLTYTLMIIYTGLQI) traverse the membrane as a helical segment. Over 461–463 (WSN) the chain is Cytoplasmic. Residues 464-484 (FSNINNSQLIFGLILVALQTW) traverse the membrane as a helical segment. Residues 485–534 (CDKETRLAISDFGWFYGDFFLSNYISTRKLTSQGIYRYLNHPEAVLGVVG) are Lumenal-facing. Residues 535-555 (VWGTVLMTNFAVTNIILAVLW) form a helical membrane-spanning segment. The Cytoplasmic portion of the chain corresponds to 556-869 (TLTNFILVKF…DIKQTLDSLA (314 aa)).

It belongs to the class VI-like SAM-binding methyltransferase superfamily. CHO2 family.

The protein localises to the endoplasmic reticulum membrane. It carries out the reaction a 1,2-diacyl-sn-glycero-3-phosphoethanolamine + S-adenosyl-L-methionine = a 1,2-diacyl-sn-glycero-3-phospho-N-methylethanolamine + S-adenosyl-L-homocysteine + H(+). It participates in phospholipid metabolism; phosphatidylcholine biosynthesis. Functionally, catalyzes the first step of the methylation pathway of phosphatidylcholine biosynthesis, the SAM-dependent methylation of phosphatidylethanolamine (PE) to phosphatidylmonomethylethanolamine (PMME). The protein is Phosphatidylethanolamine N-methyltransferase (CHO2) of Saccharomyces cerevisiae (strain AWRI1631) (Baker's yeast).